Reading from the N-terminus, the 412-residue chain is Multifunctional CCA protein (412 aa).

Residues G8 and R11 each coordinate ATP. Residues G8 and R11 each contribute to the CTP site. Mg(2+) is bound by residues D21 and D23. ATP is bound by residues R91, R137, and R140. R91, R137, and R140 together coordinate CTP. One can recognise an HD domain in the interval 228–329 (TGIHTLMTLS…VKLFDSIDAW (102 aa)).

It belongs to the tRNA nucleotidyltransferase/poly(A) polymerase family. Bacterial CCA-adding enzyme type 1 subfamily. Monomer. Can also form homodimers and oligomers. Requires Mg(2+) as cofactor. The cofactor is Ni(2+).

It catalyses the reaction a tRNA precursor + 2 CTP + ATP = a tRNA with a 3' CCA end + 3 diphosphate. The enzyme catalyses a tRNA with a 3' CCA end + 2 CTP + ATP = a tRNA with a 3' CCACCA end + 3 diphosphate. Its function is as follows. Catalyzes the addition and repair of the essential 3'-terminal CCA sequence in tRNAs without using a nucleic acid template. Adds these three nucleotides in the order of C, C, and A to the tRNA nucleotide-73, using CTP and ATP as substrates and producing inorganic pyrophosphate. tRNA 3'-terminal CCA addition is required both for tRNA processing and repair. Also involved in tRNA surveillance by mediating tandem CCA addition to generate a CCACCA at the 3' terminus of unstable tRNAs. While stable tRNAs receive only 3'-terminal CCA, unstable tRNAs are marked with CCACCA and rapidly degraded. This is Multifunctional CCA protein from Escherichia coli (strain SE11).